Consider the following 172-residue polypeptide: MAGSVADSDAVVKLDDGHLNNSLGSPVQADVYFPRLIVPFCGHIKGGMRPGKKVLVMGIVDLNPESFAISLTCGDSEDPPADVAIELKAVFTDRQLLRNSCISGERGEEQSAIPYFPFIPDQPFRVEILCEHPRFRVFVDGHQLFDFYHRIQTLSAIDTIKINGDLQITKLG.

The residue at position 2 (alanine 2) is an N-acetylalanine. Phosphoserine occurs at positions 22 and 25. Residues 39-168 enclose the Galectin domain; sequence PFCGHIKGGM…TIKINGDLQI (130 aa).

As to quaternary structure, monomer.

Its function is as follows. Does not bind lactose, and may not bind carbohydrates. In Mus musculus (Mouse), this protein is Galectin-related protein (Lgalsl).